The primary structure comprises 63 residues: Serine protease inhibitor 3 (63 aa).

The signal sequence occupies residues Met-1–Ala-23. 3 cysteine pairs are disulfide-bonded: Cys-24–Cys-39, Cys-34–Cys-52, and Cys-37–Cys-47. A Pacifastin domain is found at Cys-24–Ser-55.

The protein belongs to the protease inhibitor I19 family. Expressed in hemolymph, ovaries, testes and fat body of adults but are absent in the gut. Also present in larval hemolymph and fat body.

It is found in the secreted. Functionally, in vitro, active against alpha-chymotrypsin. The sequence is that of Serine protease inhibitor 3 from Schistocerca gregaria (Desert locust).